A 205-amino-acid chain; its full sequence is MATPLGWSQGGSGSVCLAFDQLRDVIESQEELIHQLRNVMVLQDENFVSKEEFHEIEKKLVEEKAAHAKTKALLAKEEEKLQFALGEVEVLSKQLEKEKMAFEKALSSVKSRVLQESSKKDQLITKCNEIESHIIKQEDILNGKENEIKELQQVISQQKQNFRNHISDFRIQKQQETYMAQVLDQKRKKATGMRRARSRQCSREK.

Residues 17–167 (LAFDQLRDVI…QKQNFRNHIS (151 aa)) adopt a coiled-coil conformation. Residues 138 to 185 (EDILNGKENEIKELQQVISQQKQNFRNHISDFRIQKQQETYMAQVLDQ) form a required for interaction with CBX5 and TBPL1 region. Positions 185-205 (QKRKKATGMRRARSRQCSREK) are disordered. Basic residues predominate over residues 186 to 205 (KRKKATGMRRARSRQCSREK).

This sequence belongs to the SPATA24 family. Homodimer. Interacts with CBX3, CBX5, GMNN, GTF2B, TBPL1 and the polycomb proteins PHCF2, RNF2 and SCMH1 but not with CBX1 or PCGF2. As to expression, testis-specific (at protein level).

It is found in the cytoplasm. It localises to the nucleus. The protein resides in the nucleolus. The protein localises to the nucleoplasm. Binds DNA with high affinity but does not bind to TATA boxes. Synergises with GMNN and TBP in activation of TATA box-containing promoters and with GMNN and TBPL1 in activation of the NF1 TATA-less promoter. May play a role in cytoplasm movement and removal during spermiogenesis. This is Spermatogenesis-associated protein 24 (Spata24) from Mus musculus (Mouse).